The primary structure comprises 514 residues: ATP synthase subunit alpha (514 aa).

170–177 (GDRQIGKT) is a binding site for ATP.

Belongs to the ATPase alpha/beta chains family. As to quaternary structure, F-type ATPases have 2 components, CF(1) - the catalytic core - and CF(0) - the membrane proton channel. CF(1) has five subunits: alpha(3), beta(3), gamma(1), delta(1), epsilon(1). CF(0) has three main subunits: a(1), b(2) and c(9-12). The alpha and beta chains form an alternating ring which encloses part of the gamma chain. CF(1) is attached to CF(0) by a central stalk formed by the gamma and epsilon chains, while a peripheral stalk is formed by the delta and b chains.

It is found in the cell inner membrane. The catalysed reaction is ATP + H2O + 4 H(+)(in) = ADP + phosphate + 5 H(+)(out). Produces ATP from ADP in the presence of a proton gradient across the membrane. The alpha chain is a regulatory subunit. In Pseudomonas putida (strain W619), this protein is ATP synthase subunit alpha.